The following is a 939-amino-acid chain: Dynamin-like GTPase MGM1, mitochondrial (939 aa).

A mitochondrion-targeting transit peptide spans 1–27; it reads MSAQLRAAAAITPAARRVISGPAAVRR. A helical membrane pass occupies residues 85-103; that stretch reads FIRVPALFGGMMLGAVGWV. Residues 170 to 183 are compositionally biased toward gly residues; that stretch reads AGEGSGSGEGGPNG. The tract at residues 170–196 is disordered; it reads AGEGSGSGEGGPNGGPEPPRQSRAGAA. One can recognise a Dynamin-type G domain in the interval 249–522; sequence TVTLPSIVVI…LEQQMSSKLN (274 aa). The G1 motif stretch occupies residues 259–266; the sequence is GSQSSGKS. GTP-binding residues include Ser-262, Gly-264, Lys-265, Ser-266, Ser-267, and Gly-281. Ser-266 lines the Mg(2+) pocket. A G2 motif region spans residues 285–287; that stretch reads ITR. The Mg(2+) site is built by Thr-286 and Asp-359. Residues 359–362 form a G3 motif region; that stretch reads DLPG. Positions 427-430 are G4 motif; that stretch reads TKMD. Residues Lys-428, Asp-430, and Ser-457 each contribute to the GTP site. The G5 motif stretch occupies residues 456–459; sequence ISKL. The tract at residues 549 to 703 is stalk region; it reads SAESYLAASL…TSDGIEISLK (155 aa). The segment at 710-809 is paddle region; that stretch reads DIQPNEWAQG…LSLRIQAAKS (100 aa). Residues 810 to 877 are stalk region; sequence RQCKTLTNKY…GGGLEKFARE (68 aa). Cys-812 and Cys-821 are oxidised to a cystine. Residues 815-909 enclose the GED domain; that stretch reads LTNKYYCPEV…KIEELHRISS (95 aa).

Belongs to the TRAFAC class dynamin-like GTPase superfamily. Dynamin/Fzo/YdjA family. As to quaternary structure, oligomeric complex consisting of membrane-bound and soluble forms of MGM1. Cleavage of the transit peptide by mitochondrial processing protease (MPP) produces a long integral membrane form of MGM1 (L-MGM1). Further processing by the rhomboid protease PCP1 produces a short peripheral membrane form of MGM1 (S-MGM1). Both forms are required for full activity.

It is found in the mitochondrion inner membrane. Its subcellular location is the mitochondrion intermembrane space. It catalyses the reaction GTP + H2O = GDP + phosphate + H(+). Its function is as follows. Dynamin-related GTPase that is essential for normal mitochondrial morphology by mediating fusion of the mitochondrial inner membranes, regulating cristae morphology and maintaining respiratory chain function. Exists in two forms: the transmembrane, long form (Dynamin-like GTPase MGM1, long form; L-MGM1), which is tethered to the inner mitochondrial membrane, and the short soluble form (Dynamin-like GTPase MGM1, short form; S-MGM1), which results from proteolytic cleavage and localizes in the intermembrane space. Both forms (L-MGM1 and S-MGM1) cooperate to catalyze the fusion of the mitochondrial inner membrane. The equilibrium between L-MGM1 and S-MGM1 is essential: excess levels of S-MGM1, following loss of mitochondrial membrane potential, lead to an impaired equilibrium between L-MGM1 and S-MGM1, inhibiting mitochondrial fusion. Plays a role in the maintenance and remodeling of mitochondrial cristae, some invaginations of the mitochondrial inner membrane that provide an increase in the surface area. Probably acts by forming helical filaments at the inside of inner membrane tubes with the shape and dimensions of crista junctions. Functionally, constitutes the transmembrane long form (L-MGM1) that plays a central role in mitochondrial inner membrane fusion and cristae morphology. L-MGM1 and the soluble short form (S-MGM1) form higher-order helical assemblies that coordinate the fusion of mitochondrial inner membranes. Inner membrane-anchored L-MGM1 molecules initiate membrane remodeling by recruiting soluble S-MGM1 to rapidly polymerize into a flexible cylindrical scaffold encaging the mitochondrial inner membrane. Once at the membrane surface, the formation of S-MGM1 helices induce bilayer curvature. MGM1 dimerization through the paddle region, which inserts into cardiolipin-containing membrane, promotes GTP hydrolysis and the helical assembly of a flexible MGM1 lattice on the membrane, which drives membrane curvature and mitochondrial fusion. In terms of biological role, constitutes the soluble short form (S-MGM1) generated by cleavage by PCP1, which plays a central role in mitochondrial inner membrane fusion and cristae morphology. The transmembrane long form (L-MGM1) and the S-MGM1 form higher-order helical assemblies that coordinate the fusion of mitochondrial inner membranes. Inner membrane-anchored L-MGM1 molecules initiate membrane remodeling by recruiting soluble S-MGM1 to rapidly polymerize into a flexible cylindrical scaffold encaging the mitochondrial inner membrane. Once at the membrane surface, the formation of S-MGM1 helices induce bilayer curvature. MGM1 dimerization through the paddle region, which inserts into cardiolipin-containing membrane, promotes GTP hydrolysis and the helical assembly of a flexible MGM1 lattice on the membrane, which drives membrane curvature and mitochondrial fusion. Excess levels of S-MGM1 produced by cleavage by PCP1 following stress conditions that induce loss of mitochondrial membrane potential, lead to an impaired equilibrium between L-MGM1 and S-MGM1, thereby inhibiting mitochondrial fusion. The sequence is that of Dynamin-like GTPase MGM1, mitochondrial from Chaetomium thermophilum (strain DSM 1495 / CBS 144.50 / IMI 039719) (Thermochaetoides thermophila).